We begin with the raw amino-acid sequence, 67 residues long: ATP synthase F(0) complex subunit 8 (67 aa).

The helical transmembrane segment at 8 to 24 (TWFITITSMIMTLFILF) threads the bilayer. Lys-54 bears the N6-acetyllysine; alternate mark. Lys-54 carries the N6-succinyllysine; alternate modification. An N6-acetyllysine modification is found at Lys-57.

It belongs to the ATPase protein 8 family. In terms of assembly, component of the ATP synthase complex composed at least of ATP5F1A/subunit alpha, ATP5F1B/subunit beta, ATP5MC1/subunit c (homooctomer), MT-ATP6/subunit a, MT-ATP8/subunit 8, ATP5ME/subunit e, ATP5MF/subunit f, ATP5MG/subunit g, ATP5MK/subunit k, ATP5MJ/subunit j, ATP5F1C/subunit gamma, ATP5F1D/subunit delta, ATP5F1E/subunit epsilon, ATP5PF/subunit F6, ATP5PB/subunit b, ATP5PD/subunit d, ATP5PO/subunit OSCP. ATP synthase complex consists of a soluble F(1) head domain (subunits alpha(3) and beta(3)) - the catalytic core - and a membrane F(0) domain - the membrane proton channel (subunits c, a, 8, e, f, g, k and j). These two domains are linked by a central stalk (subunits gamma, delta, and epsilon) rotating inside the F1 region and a stationary peripheral stalk (subunits F6, b, d, and OSCP). Interacts with PRICKLE3.

It localises to the mitochondrion membrane. Its function is as follows. Subunit 8, of the mitochondrial membrane ATP synthase complex (F(1)F(0) ATP synthase or Complex V) that produces ATP from ADP in the presence of a proton gradient across the membrane which is generated by electron transport complexes of the respiratory chain. ATP synthase complex consist of a soluble F(1) head domain - the catalytic core - and a membrane F(1) domain - the membrane proton channel. These two domains are linked by a central stalk rotating inside the F(1) region and a stationary peripheral stalk. During catalysis, ATP synthesis in the catalytic domain of F(1) is coupled via a rotary mechanism of the central stalk subunits to proton translocation. In vivo, can only synthesize ATP although its ATP hydrolase activity can be activated artificially in vitro. Part of the complex F(0) domain. In Sus scrofa (Pig), this protein is ATP synthase F(0) complex subunit 8.